The primary structure comprises 449 residues: Putative BTB/POZ domain-containing protein L742 (449 aa).

The BTB domain occupies 79 to 148; sequence EDGYVYINIG…LTMSNQELSG (70 aa).

This sequence belongs to the mimivirus BTB/WD family.

The polypeptide is Putative BTB/POZ domain-containing protein L742 (Acanthamoeba polyphaga mimivirus (APMV)).